We begin with the raw amino-acid sequence, 103 residues long: Large ribosomal subunit protein uL24 (103 aa).

It belongs to the universal ribosomal protein uL24 family. Part of the 50S ribosomal subunit.

Functionally, one of two assembly initiator proteins, it binds directly to the 5'-end of the 23S rRNA, where it nucleates assembly of the 50S subunit. One of the proteins that surrounds the polypeptide exit tunnel on the outside of the subunit. The polypeptide is Large ribosomal subunit protein uL24 (Listeria monocytogenes serotype 4a (strain HCC23)).